The sequence spans 121 residues: Large ribosomal subunit protein bL19 (121 aa).

The protein belongs to the bacterial ribosomal protein bL19 family.

This protein is located at the 30S-50S ribosomal subunit interface and may play a role in the structure and function of the aminoacyl-tRNA binding site. The chain is Large ribosomal subunit protein bL19 from Polaromonas sp. (strain JS666 / ATCC BAA-500).